A 124-amino-acid polypeptide reads, in one-letter code: Large ribosomal subunit protein bL12 (124 aa).

It belongs to the bacterial ribosomal protein bL12 family. In terms of assembly, homodimer. Part of the ribosomal stalk of the 50S ribosomal subunit. Forms a multimeric L10(L12)X complex, where L10 forms an elongated spine to which 2 to 4 L12 dimers bind in a sequential fashion. Binds GTP-bound translation factors.

Functionally, forms part of the ribosomal stalk which helps the ribosome interact with GTP-bound translation factors. Is thus essential for accurate translation. The sequence is that of Large ribosomal subunit protein bL12 from Jannaschia sp. (strain CCS1).